The following is a 273-amino-acid chain: 2-dehydro-3-deoxyphosphooctonate aldolase (273 aa).

It belongs to the KdsA family.

Its subcellular location is the cytoplasm. The enzyme catalyses D-arabinose 5-phosphate + phosphoenolpyruvate + H2O = 3-deoxy-alpha-D-manno-2-octulosonate-8-phosphate + phosphate. It functions in the pathway carbohydrate biosynthesis; 3-deoxy-D-manno-octulosonate biosynthesis; 3-deoxy-D-manno-octulosonate from D-ribulose 5-phosphate: step 2/3. Its pathway is bacterial outer membrane biogenesis; lipopolysaccharide biosynthesis. In Nitratidesulfovibrio vulgaris (strain DP4) (Desulfovibrio vulgaris), this protein is 2-dehydro-3-deoxyphosphooctonate aldolase.